The sequence spans 602 residues: uncharacterized protein (602 aa).

The region spanning 51–210 (QYLGTQPRDF…PFVSYQPDAD (160 aa)) is the Helicase ATP-binding domain. Over residues 430–439 (PHRESAHDPL) the composition is skewed to basic and acidic residues. Disordered stretches follow at residues 430–452 (PHRE…TERG) and 518–538 (RAQL…ASVH). Over residues 523-534 (KGATQPATSGAS) the composition is skewed to polar residues.

To M.leprae ML1624.

This is an uncharacterized protein from Mycobacterium tuberculosis (strain ATCC 25618 / H37Rv).